A 168-amino-acid polypeptide reads, in one-letter code: GTP-dependent dephospho-CoA kinase (168 aa).

GTP contacts are provided by D49, V50, V51, D68, K70, and E120.

Belongs to the GTP-dependent DPCK family.

It catalyses the reaction 3'-dephospho-CoA + GTP = GDP + CoA + H(+). It functions in the pathway cofactor biosynthesis; coenzyme A biosynthesis. Its function is as follows. Catalyzes the GTP-dependent phosphorylation of the 3'-hydroxyl group of dephosphocoenzyme A to form coenzyme A (CoA). In Pyrobaculum calidifontis (strain DSM 21063 / JCM 11548 / VA1), this protein is GTP-dependent dephospho-CoA kinase.